Reading from the N-terminus, the 645-residue chain is Acetyl-coenzyme A synthetase (645 aa).

CoA contacts are provided by residues 190–193, Thr-308, and Asn-332; that span reads RGSK. ATP is bound by residues 384 to 386, 408 to 413, Asp-497, and Arg-512; these read GEP and DTWWQT. Ser-520 provides a ligand contact to CoA. An ATP-binding site is contributed by Arg-523. Val-534, His-536, and Val-539 together coordinate Mg(2+). Arg-581 serves as a coordination point for CoA. Lys-606 is subject to N6-acetyllysine.

The protein belongs to the ATP-dependent AMP-binding enzyme family. It depends on Mg(2+) as a cofactor. Post-translationally, acetylated. Deacetylation by the SIR2-homolog deacetylase activates the enzyme.

The enzyme catalyses acetate + ATP + CoA = acetyl-CoA + AMP + diphosphate. Functionally, catalyzes the conversion of acetate into acetyl-CoA (AcCoA), an essential intermediate at the junction of anabolic and catabolic pathways. AcsA undergoes a two-step reaction. In the first half reaction, AcsA combines acetate with ATP to form acetyl-adenylate (AcAMP) intermediate. In the second half reaction, it can then transfer the acetyl group from AcAMP to the sulfhydryl group of CoA, forming the product AcCoA. This chain is Acetyl-coenzyme A synthetase, found in Bdellovibrio bacteriovorus (strain ATCC 15356 / DSM 50701 / NCIMB 9529 / HD100).